Reading from the N-terminus, the 240-residue chain is Large ribosomal subunit protein uL1c (240 aa).

It belongs to the universal ribosomal protein uL1 family. Part of the 50S ribosomal subunit.

It localises to the plastid. It is found in the chloroplast. Its function is as follows. Binds directly to 23S rRNA. Might be involved in E site tRNA release (Potential). The chain is Large ribosomal subunit protein uL1c (rpl1) from Cyanidium caldarium (Red alga).